Consider the following 323-residue polypeptide: uncharacterized protein (323 aa).

Disordered stretches follow at residues 185 to 214 (AELMKSEDSPEKDEETLRREERKQKEGSSW) and 271 to 294 (GNIISQKDNPPKSDSDDEDDYEKL).

Belongs to the IGBP1/TAP42 family.

This is an uncharacterized protein from Schizosaccharomyces pombe (strain 972 / ATCC 24843) (Fission yeast).